The sequence spans 469 residues: RuvB-like helicase 2 (469 aa).

Residue 73 to 80 (GEPGTGKT) participates in ATP binding.

It belongs to the RuvB family. In terms of assembly, forms homohexameric rings. May form a dodecamer with rvb1 made of two stacked hexameric rings. Component of the chromatin remodeling Ino80 complex. Component of the RNA polymerase II holoenzyme complex.

Its subcellular location is the nucleus. The enzyme catalyses ATP + H2O = ADP + phosphate + H(+). Has double-stranded DNA-stimulated ATPase and ATP-dependent DNA helicase (5' to 3') activity suggesting a role in nuclear processes such as recombination and transcription. In terms of biological role, proposed core component of the chromatin remodeling Ino80 complex which is involved in transcriptional regulation, DNA replication and probably DNA repair. This Dictyostelium discoideum (Social amoeba) protein is RuvB-like helicase 2 (rvb2).